The sequence spans 152 residues: Endoribonuclease YbeY (152 aa).

Zn(2+)-binding residues include His113, His117, and His123.

Belongs to the endoribonuclease YbeY family. Requires Zn(2+) as cofactor.

The protein localises to the cytoplasm. Single strand-specific metallo-endoribonuclease involved in late-stage 70S ribosome quality control and in maturation of the 3' terminus of the 16S rRNA. The sequence is that of Endoribonuclease YbeY from Paracidovorax citrulli (strain AAC00-1) (Acidovorax citrulli).